The sequence spans 290 residues: Glycine--tRNA ligase alpha subunit (290 aa).

It belongs to the class-II aminoacyl-tRNA synthetase family. As to quaternary structure, tetramer of two alpha and two beta subunits.

The protein resides in the cytoplasm. It carries out the reaction tRNA(Gly) + glycine + ATP = glycyl-tRNA(Gly) + AMP + diphosphate. This chain is Glycine--tRNA ligase alpha subunit, found in Prochlorococcus marinus (strain NATL1A).